We begin with the raw amino-acid sequence, 157 residues long: Protein Smg (157 aa).

It belongs to the Smg family.

The polypeptide is Protein Smg (Yersinia pseudotuberculosis serotype O:1b (strain IP 31758)).